Consider the following 115-residue polypeptide: Large ribosomal subunit protein uL22 (115 aa).

The protein belongs to the universal ribosomal protein uL22 family. As to quaternary structure, part of the 50S ribosomal subunit.

Functionally, this protein binds specifically to 23S rRNA; its binding is stimulated by other ribosomal proteins, e.g. L4, L17, and L20. It is important during the early stages of 50S assembly. It makes multiple contacts with different domains of the 23S rRNA in the assembled 50S subunit and ribosome. In terms of biological role, the globular domain of the protein is located near the polypeptide exit tunnel on the outside of the subunit, while an extended beta-hairpin is found that lines the wall of the exit tunnel in the center of the 70S ribosome. This is Large ribosomal subunit protein uL22 from Enterococcus faecalis (strain ATCC 700802 / V583).